The sequence spans 220 residues: Putative respiratory nitrate reductase subunit Rieske (220 aa).

The 89-residue stretch at 118 to 206 folds into the Rieske domain; the sequence is KAPTLLVRHA…ITVSSEGYLI (89 aa). Residues cysteine 151, histidine 153, cysteine 168, and histidine 171 each contribute to the [2Fe-2S] cluster site. A disulfide bond links cysteine 156 and cysteine 170.

Probable multiprotein complex; a catalytic heterodimer of an alpha and beta chain is proposed to associate with additional subunits involved in membrane attachment and electron transfer. Requires [2Fe-2S] cluster as cofactor.

It is found in the cell membrane. In terms of biological role, the respiratory membrane-bound nitrate reductase enzyme complex plays a role in generation of metabolic energy by using nitrate as a terminal electron acceptor during anaerobic conditions. Proposed Rieske subunit involved in a protonmotive Q-cycle mechanism-based electron transfer electrons to the beta subunit. This Haloferax mediterranei (strain ATCC 33500 / DSM 1411 / JCM 8866 / NBRC 14739 / NCIMB 2177 / R-4) (Halobacterium mediterranei) protein is Putative respiratory nitrate reductase subunit Rieske (narB).